The primary structure comprises 296 residues: Phosphatidylglycerol--prolipoprotein diacylglyceryl transferase (296 aa).

A run of 4 helical transmembrane segments spans residues 10 to 30 (IAFSLGPVQVHWYGLMYLAAF), 57 to 77 (LLFYGMLGVVLGGRIGYMLFY), 92 to 112 (VWEGGMSFHGGLLGVLIACGL), and 119 to 139 (LHFFDVMDFVAPLVPLGLGFG). Arginine 140 is an a 1,2-diacyl-sn-glycero-3-phospho-(1'-sn-glycerol) binding site. 3 consecutive transmembrane segments (helical) span residues 194–214 (QLYEAALEGVVMFVVLWTFSM), 220–240 (YAVSGLFALLYGVFRFIVEFV), and 255–275 (LTMGQILSLPLIGVGLVLLAL).

The protein belongs to the Lgt family.

Its subcellular location is the cell inner membrane. It catalyses the reaction L-cysteinyl-[prolipoprotein] + a 1,2-diacyl-sn-glycero-3-phospho-(1'-sn-glycerol) = an S-1,2-diacyl-sn-glyceryl-L-cysteinyl-[prolipoprotein] + sn-glycerol 1-phosphate + H(+). Its pathway is protein modification; lipoprotein biosynthesis (diacylglyceryl transfer). Functionally, catalyzes the transfer of the diacylglyceryl group from phosphatidylglycerol to the sulfhydryl group of the N-terminal cysteine of a prolipoprotein, the first step in the formation of mature lipoproteins. The polypeptide is Phosphatidylglycerol--prolipoprotein diacylglyceryl transferase (Xanthomonas campestris pv. campestris (strain 8004)).